A 615-amino-acid chain; its full sequence is (+)-alpha-pinene synthase TPS2, chloroplastic (615 aa).

A chloroplast-targeting transit peptide spans 1–55 (MHCMAVRHFAPSSSLSIFSSTNINNHFFGREIFTPKTSNITTKKSRSRPNCNPIQ). R330, D367, D371, R509, and D512 together coordinate (2E)-geranyl diphosphate. The Mg(2+) site is built by D367 and D371. The DDXXD motif signature appears at 367-371 (DDIYD). Residues D512, T516, and E520 each contribute to the Mg(2+) site.

Belongs to the terpene synthase family. Tpsb subfamily. Mg(2+) is required as a cofactor. The cofactor is Mn(2+). It depends on K(+) as a cofactor. As to expression, trichome.

It localises to the plastid. It is found in the chloroplast. The enzyme catalyses (2E)-geranyl diphosphate = (1R,5R)-alpha-pinene + diphosphate. It carries out the reaction (2E)-geranyl diphosphate = (1R,5R)-beta-pinene + diphosphate. It catalyses the reaction (2E)-geranyl diphosphate = (4S)-limonene + diphosphate. The catalysed reaction is (2E)-geranyl diphosphate = beta-myrcene + diphosphate. It functions in the pathway secondary metabolite biosynthesis; terpenoid biosynthesis. It participates in terpene metabolism; (-)-alpha-pinene biosynthesis; (-)-alpha-pinene from geranyl diphosphate: step 1/1. Involved in monoterpene (C10) olefins biosynthesis, constituants of cannabinoids and terpenoids-rich resins. Catalyzes mainly the conversion of (2E)-geranyl diphosphate to (+)-alpha-pinene, and also produces minor products such as (-)-limonene, (+)-beta-pinene and beta-myrcene. The polypeptide is (+)-alpha-pinene synthase TPS2, chloroplastic (Cannabis sativa (Hemp)).